A 1578-amino-acid chain; its full sequence is MSVELAKVSILGKECVHVGYQIHEHIVKSTLEHCKSSTYVIINDTNVSKVPYYHDLVSLFEKSLPEGSRLLRYDVKPGEAHKSRETKADIEDYLLLEGCTRDTVIIAVGGGVIGDMIGFVASTFMRGVRVIQVPTSLLAMVDSSIGGKTAVDTPLGKNFVGAFWQPQFVFVDIKWLETLPQREFINGIAEVIKTACIWNGEEFARLEANAETFLSVVNNSQTVSVFSPHHNETVELTYTNIESMLEHTYKLVLESIKVKAHVVSSDERESGLRNLLNFGHTIGHAYEAILTPQALHGECVSIGMVKEAELSRYMNILSATQVARMVKILAAYGLPISVNEKWFKELTLNKKTPLDVLLKKMSIDKKNDGSKKKVVILEKIGKCYGTSAHVVSDEDLRFVLSDETLVHPFNNIPEGQNKVITPPGSKSISNRALILAALGKGTCKIKNLLHSDDTKHMLNAVQQLKGATISWEDDGETVVVHGQGGSTLTAPSEALYLGNAGTASRFLTTVAALAKKDGKNDHVILTGNARMQERPIGPLVDSLRSNGLKIDYLNRQGSLPLKINTETNFKGGKIELAATVSSQYVSSILMCAPYAEEPVTLSLIGGKPISQLYVDMTIKMMDAFGIKVTTSTTEPFTYHIPKGNYINPAEYTIESDASSATYPLSFAAITGTTVTVPNIGSASLQGDARFAVDVLRPMGCEVTQTATSTTVTGPPRGQLKPLKHVDMEPMTDAFLTASVVAAICNNGTTNTTTIEGIANQRVKECNRIEAMVTQLAKFGVRANELPDGIQIHGVNSISELRQPSDAGIETYDDHRVAMSFSLLAGMVNSDKKDDESSVRILERQCTGKTWPGWWDVLHSQLGARLDGAEPSTTKSSEVKKSVVIIGMRAAGKSTVSKWCAESLGYRLLDLDEEFERQYGKGTVKDFVAESGWDEFRKEETRIFQEAVDKYGDKGYVLSSGGGIVERSESRQALKRFAESGGIVLHLHRDIEETIVFLKSDPTRPAYIEEIRDVWERREKWYHECSNFTFFAAHCSNEIEFRNLRHVFSNFIRRVLGAEKIPVPSRRSAFVCLTFEDLSDHLSKLDEITYGCEAVELRVDHLSSFSSDFVTKQISLLRAATKSLPIVFTVRTVSQGGKFQDDDYDLLESLLKVALKNAVEYIDLELTLPNNILYNVLNKKSNTKIIGSHHDFAAKFPWDDAEWENRYNQALSLDVDIVKFVGTAVSFDDNLALEKFRSTHTLKPLIAINMTETGKLSRVLNNILTPVTSKLLPSAAAPGQLTLAEINQLYHQIGGLPAKKFFVIGSPIGHSRSPILHNTGYELLGLPHHFDKFETEDIEVVKKELLTREDLGGLAVTIPLKLDIIDSMFELSEAAKTIGAVNTVIPLGKNKFRGDNTDWLGIKNSLVSNGVPSSVSGSAGLIIGAGGTSRAAIYALKQIGCDTIYMLNRTTEKLQKLKSEFSEEYKIVVVESAEQTESIKEQVSVAVSCVPADKPLDPELLNKLERLLAKGTNSSFKPTLLDAAYKPSVTPIMKLARDKFNWNIVPGAEMLVHQGVEQFSKWTGAKPPFKAIFDAVTQE.

Positions Met-1–Asp-393 are 3-dehydroquinate synthase. NAD(+) is bound by residues Asp-44–Asn-46, Glu-79–Lys-82, Gly-110–Val-112, and Asp-115. Arg-126 contributes to the 7-phospho-2-dehydro-3-deoxy-D-arabino-heptonate binding site. Thr-135–Ser-136 contacts NAD(+). 2 residues coordinate 7-phospho-2-dehydro-3-deoxy-D-arabino-heptonate: Asp-142 and Lys-148. Lys-157 serves as a coordination point for NAD(+). Asn-158 serves as a coordination point for 7-phospho-2-dehydro-3-deoxy-D-arabino-heptonate. NAD(+) contacts are provided by residues Trp-175 to Thr-178 and Asn-186. Glu-190 provides a ligand contact to Zn(2+). 7-phospho-2-dehydro-3-deoxy-D-arabino-heptonate-binding positions include Glu-190–Lys-193 and Lys-259. Catalysis depends on Glu-269, which acts as the Proton acceptor; for 3-dehydroquinate synthase activity. 7-phospho-2-dehydro-3-deoxy-D-arabino-heptonate-binding positions include Arg-273–Asn-277 and His-280. His-280 is a Zn(2+) binding site. His-284 (proton acceptor; for 3-dehydroquinate synthase activity) is an active-site residue. Positions 296 and 365 each coordinate 7-phospho-2-dehydro-3-deoxy-D-arabino-heptonate. A Zn(2+)-binding site is contributed by His-296. The interval Val-406–Ala-863 is EPSP synthase. The For EPSP synthase activity role is filled by Cys-845. The shikimate kinase stretch occupies residues Val-882 to Cys-1071. Gly-886–Ser-893 provides a ligand contact to ATP. Residues Leu-1072–Glu-1284 are 3-dehydroquinase. His-1189 functions as the Proton acceptor; for 3-dehydroquinate dehydratase activity in the catalytic mechanism. Lys-1218 (schiff-base intermediate with substrate; for 3-dehydroquinate dehydratase activity) is an active-site residue. Residues Ala-1297–Glu-1578 are shikimate dehydrogenase.

It in the N-terminal section; belongs to the sugar phosphate cyclases superfamily. Dehydroquinate synthase family. This sequence in the 2nd section; belongs to the EPSP synthase family. In the 3rd section; belongs to the shikimate kinase family. The protein in the 4th section; belongs to the type-I 3-dehydroquinase family. It in the C-terminal section; belongs to the shikimate dehydrogenase family. As to quaternary structure, homodimer. The cofactor is Zn(2+).

It localises to the cytoplasm. It catalyses the reaction 7-phospho-2-dehydro-3-deoxy-D-arabino-heptonate = 3-dehydroquinate + phosphate. The catalysed reaction is 3-dehydroquinate = 3-dehydroshikimate + H2O. The enzyme catalyses shikimate + NADP(+) = 3-dehydroshikimate + NADPH + H(+). It carries out the reaction shikimate + ATP = 3-phosphoshikimate + ADP + H(+). It catalyses the reaction 3-phosphoshikimate + phosphoenolpyruvate = 5-O-(1-carboxyvinyl)-3-phosphoshikimate + phosphate. Its pathway is metabolic intermediate biosynthesis; chorismate biosynthesis; chorismate from D-erythrose 4-phosphate and phosphoenolpyruvate: step 2/7. The protein operates within metabolic intermediate biosynthesis; chorismate biosynthesis; chorismate from D-erythrose 4-phosphate and phosphoenolpyruvate: step 3/7. It functions in the pathway metabolic intermediate biosynthesis; chorismate biosynthesis; chorismate from D-erythrose 4-phosphate and phosphoenolpyruvate: step 4/7. It participates in metabolic intermediate biosynthesis; chorismate biosynthesis; chorismate from D-erythrose 4-phosphate and phosphoenolpyruvate: step 5/7. Its pathway is metabolic intermediate biosynthesis; chorismate biosynthesis; chorismate from D-erythrose 4-phosphate and phosphoenolpyruvate: step 6/7. The AROM polypeptide catalyzes 5 consecutive enzymatic reactions in prechorismate polyaromatic amino acid biosynthesis. This chain is Pentafunctional AROM polypeptide, found in Kluyveromyces lactis (strain ATCC 8585 / CBS 2359 / DSM 70799 / NBRC 1267 / NRRL Y-1140 / WM37) (Yeast).